The primary structure comprises 481 residues: Glutamyl-tRNA(Gln) amidotransferase subunit A (481 aa).

Active-site charge relay system residues include Lys76 and Ser151. Ser175 functions as the Acyl-ester intermediate in the catalytic mechanism.

Belongs to the amidase family. GatA subfamily. As to quaternary structure, heterotrimer of A, B and C subunits.

It carries out the reaction L-glutamyl-tRNA(Gln) + L-glutamine + ATP + H2O = L-glutaminyl-tRNA(Gln) + L-glutamate + ADP + phosphate + H(+). Allows the formation of correctly charged Gln-tRNA(Gln) through the transamidation of misacylated Glu-tRNA(Gln) in organisms which lack glutaminyl-tRNA synthetase. The reaction takes place in the presence of glutamine and ATP through an activated gamma-phospho-Glu-tRNA(Gln). The chain is Glutamyl-tRNA(Gln) amidotransferase subunit A from Neisseria gonorrhoeae (strain ATCC 700825 / FA 1090).